The sequence spans 417 residues: Alpha-galactosidase (417 aa).

The signal sequence occupies residues 1–55 (MARASSSSSPPSPRLLLLLLVAVAATLLPEAAALGNFTAESRGARWRSRRARRRA). 9 residues coordinate alpha-D-galactose: tryptophan 71, aspartate 106, aspartate 107, cysteine 156, lysine 183, aspartate 185, tryptophan 219, arginine 236, and aspartate 240. 2 cysteine pairs are disulfide-bonded: cysteine 76–cysteine 108 and cysteine 156–cysteine 187. Aspartate 185 functions as the Nucleophile in the catalytic mechanism. Aspartate 240 acts as the Proton donor in catalysis.

This sequence belongs to the glycosyl hydrolase 27 family.

The enzyme catalyses Hydrolysis of terminal, non-reducing alpha-D-galactose residues in alpha-D-galactosides, including galactose oligosaccharides, galactomannans and galactolipids.. It catalyses the reaction melibiose + H2O = D-galactose + D-glucose. The catalysed reaction is raffinose + H2O = sucrose + D-galactose. It carries out the reaction stachyose + H2O = raffinose + D-galactose. The enzyme catalyses alpha-D-Gal-(1-&gt;6)-beta-D-Man-(1-&gt;4)-beta-D-Man-(1-&gt;4)-D-Man + H2O = beta-D-Man-(1-&gt;4)-beta-D-Man-(1-&gt;4)-D-Man + D-galactose. It catalyses the reaction beta-D-Man-(1-&gt;4)-[alpha-D-Gal-(1-&gt;6)]-beta-D-Man-(1-&gt;4)-beta-D-Man-(1-&gt;4)-D-Man + H2O = beta-D-Man-(1-&gt;4)-beta-D-Man-(1-&gt;4)-beta-D-Man-(1-&gt;4)-D-Man + D-galactose. With respect to regulation, 1 mM Hg(2+) and Ag(2+) decrease activity by 98% and 96%, respectively. 1 mM Para-chloromercuribenzoic acid (PCMB) completely inhibits enzymatic activity. Hydrolyzes melibiose, raffinose and stachyose in the following decreasing order of reactivity: raffinose, melibiose, stachyose. Acts on both the terminal alpha-galactosyl residue and the side-chain alpha-galactosyl residue of the galactomanno-oligosaccharides. In Oryza sativa subsp. japonica (Rice), this protein is Alpha-galactosidase.